Consider the following 111-residue polypeptide: Phosphoribosyl-ATP pyrophosphatase (111 aa).

This sequence belongs to the PRA-PH family.

Its subcellular location is the cytoplasm. It carries out the reaction 1-(5-phospho-beta-D-ribosyl)-ATP + H2O = 1-(5-phospho-beta-D-ribosyl)-5'-AMP + diphosphate + H(+). Its pathway is amino-acid biosynthesis; L-histidine biosynthesis; L-histidine from 5-phospho-alpha-D-ribose 1-diphosphate: step 2/9. This is Phosphoribosyl-ATP pyrophosphatase from Pseudomonas putida (strain ATCC 700007 / DSM 6899 / JCM 31910 / BCRC 17059 / LMG 24140 / F1).